Reading from the N-terminus, the 274-residue chain is Deoxyribonuclease TATDN3 (274 aa).

Residues histidine 12, histidine 14, glutamate 107, histidine 147, histidine 170, and aspartate 218 each contribute to the Zn(2+) site.

Belongs to the metallo-dependent hydrolases superfamily. TatD-type hydrolase family. It depends on Mn(2+) as a cofactor. Ca(2+) serves as cofactor. The cofactor is Mg(2+). Zn(2+) is required as a cofactor.

The protein localises to the nucleus. With respect to regulation, the 3'-exonuclease activity is sensitive to the metal ion present in the active site, whereas the AP endodeoxyribonuclease activity is observed in a variety of divalent metal cofactors. 3'-exoxonuclease activity is suppressed in the presence of Ca(2+), Zn(2+) and Ni(2+). Exhibits 3'-exonuclease activities and apurinic/apyrimidinic (AP) endonuclease (in vitro). Show preferential AP endonuclease activity on double-stranded DNA substrates and 3'- exonuclease activity on single-stranded DNA. The protein is Deoxyribonuclease TATDN3 (TATDN3) of Homo sapiens (Human).